The following is a 401-amino-acid chain: Diphosphomevalonate decarboxylase (401 aa).

Ala-2 is modified (N-acetylalanine). (R)-5-diphosphomevalonate is bound by residues 24–27, Arg-79, 157–162, and Thr-213; these read YWGK and SGSACR. The disordered stretch occupies residues 382–401; it reads VLDDPHHHLLGPDGLPQRDL.

It belongs to the diphosphomevalonate decarboxylase family. As to quaternary structure, homodimer.

It localises to the cytoplasm. The enzyme catalyses (R)-5-diphosphomevalonate + ATP = isopentenyl diphosphate + ADP + phosphate + CO2. Its pathway is steroid biosynthesis; cholesterol biosynthesis. In terms of biological role, catalyzes the ATP dependent decarboxylation of (R)-5-diphosphomevalonate to form isopentenyl diphosphate (IPP). Functions in the mevalonate (MVA) pathway leading to isopentenyl diphosphate (IPP), a key precursor for the biosynthesis of isoprenoids and sterol synthesis. The polypeptide is Diphosphomevalonate decarboxylase (Mvd) (Rattus norvegicus (Rat)).